The sequence spans 722 residues: Probable C-mannosyltransferase DPY19L4 (722 aa).

The disordered stretch occupies residues M1–P34. Position 2 is an N-acetylalanine (A2). The segment covering A25–P34 has biased composition (basic and acidic residues). The next 12 helical transmembrane spans lie at I51–A71, V160–A177, W183–I201, F246–W262, V268–V284, Y291–L307, A313–C331, F351–V369, L420–F440, I465–L485, F487–W507, and P521–W541.

Belongs to the dpy-19 family.

The protein resides in the membrane. Probable C-mannosyltransferase that mediates C-mannosylation of tryptophan residues on target proteins. In Mus musculus (Mouse), this protein is Probable C-mannosyltransferase DPY19L4 (Dpy19l4).